A 108-amino-acid chain; its full sequence is MTLIMIGVDLVKIERLENKSDHFVRKILSLDEYELYQKTKAKAIFLATRWAIKEALFKADNQHFCFKKINITKKDNVYKFDGFAISVSSEKEYVIAFVQKIGVACHRD.

Mg(2+)-binding residues include aspartate 9 and glutamate 54.

The protein belongs to the P-Pant transferase superfamily. AcpS family. Mg(2+) is required as a cofactor.

Its subcellular location is the cytoplasm. It carries out the reaction apo-[ACP] + CoA = holo-[ACP] + adenosine 3',5'-bisphosphate + H(+). Its function is as follows. Transfers the 4'-phosphopantetheine moiety from coenzyme A to a Ser of acyl-carrier-protein. This is Holo-[acyl-carrier-protein] synthase from Mycoplasmopsis pulmonis (strain UAB CTIP) (Mycoplasma pulmonis).